A 239-amino-acid chain; its full sequence is Ribosome assembly factor mrt4 (239 aa).

Belongs to the universal ribosomal protein uL10 family. As to quaternary structure, associates with the pre-60S ribosomal particle.

It localises to the nucleus. The protein localises to the nucleolus. Its subcellular location is the cytoplasm. Its function is as follows. Component of the ribosome assembly machinery. Nuclear paralog of the ribosomal protein P0, it binds pre-60S subunits at an early stage of assembly in the nucleolus, and is replaced by P0 in cytoplasmic pre-60S subunits and mature 80S ribosomes. The chain is Ribosome assembly factor mrt4 from Candida glabrata (strain ATCC 2001 / BCRC 20586 / JCM 3761 / NBRC 0622 / NRRL Y-65 / CBS 138) (Yeast).